Reading from the N-terminus, the 562-residue chain is Potassium-transporting ATPase potassium-binding subunit (562 aa).

12 helical membrane-spanning segments follow: residues 6–26, 62–82, 132–152, 175–195, 253–273, 283–303, 327–347, 356–376, 379–399, 416–436, 483–503, and 524–544; these read FLLI…LGGF, YALA…VLLM, GLTV…FALI, LYVL…QGVL, FVQM…FGQV, LIWA…YAEL, FGIL…CGAV, ALGG…FGGV, GLYG…LMIG, MTAL…ALAL, LLLA…VLAI, and GLLF…LTFI.

This sequence belongs to the KdpA family. In terms of assembly, the system is composed of three essential subunits: KdpA, KdpB and KdpC.

It is found in the cell inner membrane. Its function is as follows. Part of the high-affinity ATP-driven potassium transport (or Kdp) system, which catalyzes the hydrolysis of ATP coupled with the electrogenic transport of potassium into the cytoplasm. This subunit binds the periplasmic potassium ions and delivers the ions to the membrane domain of KdpB through an intramembrane tunnel. The polypeptide is Potassium-transporting ATPase potassium-binding subunit (Yersinia pestis bv. Antiqua (strain Antiqua)).